A 176-amino-acid chain; its full sequence is MWVLALGGAFLAVAKACIFCRLQDHALANRLAQLNNQTKPKWKWKEWASPDFSAFALDEVSMKQVTEKTHRVLRVIEKKGSTSLIPLYWQWLQKTRIPQYTREALCAPVCRGSTILYNCSTCEGKEESCWPQKHCYPDSHDLWDARILLLCIFGIVLLSGVVSLQVEYLNLQAKDL.

The first 16 residues, 1–16, serve as a signal peptide directing secretion; the sequence is MWVLALGGAFLAVAKA. Disulfide bonds link cysteine 17–cysteine 119, cysteine 20–cysteine 122, cysteine 106–cysteine 129, and cysteine 110–cysteine 135. At 17–146 the chain is on the extracellular side; sequence CIFCRLQDHA…PDSHDLWDAR (130 aa). Residues asparagine 36 and asparagine 118 are each glycosylated (N-linked (GlcNAc...) asparagine). Residues 147-167 form a helical membrane-spanning segment; that stretch reads ILLLCIFGIVLLSGVVSLQVE. Residues 168-176 lie on the Cytoplasmic side of the membrane; the sequence is YLNLQAKDL.

It belongs to the TMEM95 family. In terms of assembly, does not interact with sperm-egg fusion proteins IZUMO1 or IZUMO1R/JUNO. In terms of processing, N-glycosylated. In terms of tissue distribution, expressed exclusively in testis.

It is found in the cytoplasmic vesicle. The protein localises to the secretory vesicle. It localises to the acrosome membrane. Functionally, sperm protein required for fusion of sperm with the egg membrane during fertilization. This is Sperm-egg fusion protein TMEM95 from Mus musculus (Mouse).